Consider the following 193-residue polypeptide: Bcl-2-like protein 2 (193 aa).

Alanine 2 bears the N-acetylalanine mark. The BH4 signature appears at 9–29 (DTRALVADFVGYKLRQKGYVC). The BH1 motif lies at 85-104 (ELFQGGPNWGRLVAFFVFGA). The BH2 motif lies at 136-151 (DWIHSSGGWAEFTALY).

This sequence belongs to the Bcl-2 family. In terms of assembly, interacts with HIF3A isoform 2 (via C-terminus domain). Interacts with BOP. Expressed in almost all myeloid cell lines and in a wide range of tissues, with highest levels in brain, colon, and salivary gland.

The protein localises to the mitochondrion membrane. In terms of biological role, promotes cell survival. Blocks dexamethasone-induced apoptosis. Mediates survival of postmitotic Sertoli cells by suppressing death-promoting activity of BAX. This chain is Bcl-2-like protein 2 (Bcl2l2), found in Mus musculus (Mouse).